Consider the following 647-residue polypeptide: Beta-galactosidase (647 aa).

The signal sequence occupies residues 1–24 (MLRVPLCTPLPLLALLQLLGAAHG). Positions 25 to 29 (IYNVT) are excised as a propeptide. N-linked (GlcNAc...) asparagine glycosylation occurs at asparagine 27. Tyrosine 84, glutamate 130, and asparagine 188 together coordinate substrate. Glutamate 189 acts as the Proton donor in catalysis. An intrachain disulfide couples cysteine 196 to cysteine 231. A glycan (N-linked (GlcNAc...) asparagine) is linked at asparagine 248. Residue glutamate 269 is the Nucleophile of the active site. Tyrosine 334 provides a ligand contact to substrate. N-linked (GlcNAc...) asparagine glycans are attached at residues asparagine 500, asparagine 504, asparagine 510, asparagine 544, asparagine 557, and asparagine 617. Cysteine 628 and cysteine 636 are disulfide-bonded.

This sequence belongs to the glycosyl hydrolase 35 family. As to quaternary structure, homodimer. May form higher multimers.

It is found in the lysosome. The enzyme catalyses Hydrolysis of terminal non-reducing beta-D-galactose residues in beta-D-galactosides.. Functionally, cleaves beta-linked terminal galactosyl residues from gangliosides, glycoproteins, and glycosaminoglycans. This is Beta-galactosidase (Glb1) from Mus musculus (Mouse).